The following is a 272-amino-acid chain: Putative phosphoenolpyruvate synthase regulatory protein (272 aa).

152-159 (GVSRSGKT) is a binding site for ADP.

Belongs to the pyruvate, phosphate/water dikinase regulatory protein family. PSRP subfamily.

It carries out the reaction [pyruvate, water dikinase] + ADP = [pyruvate, water dikinase]-phosphate + AMP + H(+). The catalysed reaction is [pyruvate, water dikinase]-phosphate + phosphate + H(+) = [pyruvate, water dikinase] + diphosphate. Its function is as follows. Bifunctional serine/threonine kinase and phosphorylase involved in the regulation of the phosphoenolpyruvate synthase (PEPS) by catalyzing its phosphorylation/dephosphorylation. The polypeptide is Putative phosphoenolpyruvate synthase regulatory protein (Alcanivorax borkumensis (strain ATCC 700651 / DSM 11573 / NCIMB 13689 / SK2)).